The chain runs to 458 residues: MSTGTVVQVIGAVVDVEFPHDAVPQVYDALEIKSEGLVLEVQQQLGGGVVRTIAMGSSDGLRRGIEVVNTGSPITVPVGSATLGRIMNVLGQPVDEAGPIGEDERYVIHREAPSYEDQSNTTELLETGIKVIDLVCPFAKGGKVGLFGGAGVGKTVNMMELINNIAKAHSGLSVFAGVGERTREGNDFYYEMEESGVLDKVAMVYGQMNEPPGNRLRVALTGLTMAEKFRDEGKDVLLFVDNIYRYTLAGTEVSALLGRMPSAVGYQPTLAEEMGVLQERITSTKTGSITSVQAVYVPADDLTDPSPATTFAHLDATVVLSRNIASLGIYPAVDPLDSTSRQLDPQVVGQEHYDVASGVQNVLQRYKELKDIIAILGMDELSDEDKTTVARARKIEKYLSQPFFVAEVFTGSPGKYVALKDTIRGFKGLLEGEFDHIPEQAFYMAGSIDEVIERANKK.

Glycine 148–threonine 155 is an ATP binding site.

This sequence belongs to the ATPase alpha/beta chains family. In terms of assembly, F-type ATPases have 2 components, CF(1) - the catalytic core - and CF(0) - the membrane proton channel. CF(1) has five subunits: alpha(3), beta(3), gamma(1), delta(1), epsilon(1). CF(0) has three main subunits: a(1), b(2) and c(9-12). The alpha and beta chains form an alternating ring which encloses part of the gamma chain. CF(1) is attached to CF(0) by a central stalk formed by the gamma and epsilon chains, while a peripheral stalk is formed by the delta and b chains.

The protein resides in the cell inner membrane. It carries out the reaction ATP + H2O + 4 H(+)(in) = ADP + phosphate + 5 H(+)(out). Its function is as follows. Produces ATP from ADP in the presence of a proton gradient across the membrane. The catalytic sites are hosted primarily by the beta subunits. In Shewanella loihica (strain ATCC BAA-1088 / PV-4), this protein is ATP synthase subunit beta.